Here is a 258-residue protein sequence, read N- to C-terminus: Small ribosomal subunit protein uS15m (258 aa).

The transit peptide at 1–57 (MLRAAWRALSSVRAQAVTRAPVPALRGGSSASLLSARCGLQPPSLLRAARAYAAVQK) directs the protein to the mitochondrion. The disordered stretch occupies residues 229–258 (KAAAAAAKKEKNEGVPENPSNAVPEKTQVN).

It belongs to the universal ribosomal protein uS15 family. In terms of assembly, component of the mitochondrial ribosome small subunit (28S) which comprises a 12S rRNA and about 30 distinct proteins. Interacts with METTL17.

The protein localises to the mitochondrion matrix. In Mus musculus (Mouse), this protein is Small ribosomal subunit protein uS15m (Mrps15).